A 1425-amino-acid polypeptide reads, in one-letter code: Zinc finger FYVE domain-containing protein 9 (1425 aa).

Disordered regions lie at residues 201–255 (ESTE…IGRD) and 291–352 (EDLT…SGRN). Residues 202–225 (STEKDMNSEKQMDPLNRPKTEGRS) show a composition bias toward basic and acidic residues. Polar residues-rich tracts occupy residues 230–245 (CPTS…SPSQ) and 296–312 (KISS…SFSH). Phosphoserine occurs at positions 306 and 668. An FYVE-type zinc finger spans residues 699–758 (DSQAPNCMKCEARFTFTKRRHHCRACGKVFCASCCSLKCKLLYMDRKEARVCVICHSVLM). Cys-705, Cys-708, Cys-721, Cys-724, Cys-729, Cys-732, Cys-750, and Cys-753 together coordinate Zn(2+). Residues 767–823 (MSASSQSPNPNNPAEYCSTIPPLQQAQASGALSSPPPTVMVPVGVLKHPGAEVAQPR) form an SBD region.

In terms of assembly, interacts (via the SBD region) with SMAD2; the interaction recruits SMAD2 to the TGF-beta receptor and is disrupted by phosphorylation of SMAD2 upon TGF-beta receptor activation. Interacts with SMAD3. Interacts with TGFBR1 and TGFBR2; the interaction recruits SMAD2 to the TGF-beta receptor. Interacts with PML. Ubiquitous. In the brain found primarily in the cerebrovascular smooth muscle cells and reactive astrocytes.

The protein localises to the cytoplasm. It localises to the early endosome membrane. In terms of biological role, early endosomal protein that functions to recruit SMAD2/SMAD3 to intracellular membranes and to the TGF-beta receptor. Plays a significant role in TGF-mediated signaling by regulating the subcellular location of SMAD2 and SMAD3 and modulating the transcriptional activity of the SMAD3/SMAD4 complex. Possibly associated with TGF-beta receptor internalization. This Homo sapiens (Human) protein is Zinc finger FYVE domain-containing protein 9 (ZFYVE9).